Here is a 335-residue protein sequence, read N- to C-terminus: Holliday junction branch migration complex subunit RuvB (335 aa).

Residues 1–183 (MDERIISSET…FGVIDHLEFY (183 aa)) form a large ATPase domain (RuvB-L) region. Residues leucine 22, arginine 23, glycine 64, lysine 67, threonine 68, threonine 69, 130–132 (EDY), arginine 173, tyrosine 183, and arginine 220 contribute to the ATP site. Threonine 68 serves as a coordination point for Mg(2+). The segment at 184–254 (TEEQLTEIVL…LAKEALTLLQ (71 aa)) is small ATPAse domain (RuvB-S). A head domain (RuvB-H) region spans residues 257–335 (PRGLDTIDQK…HLGISYEKEV (79 aa)). The DNA site is built by arginine 293, arginine 312, and arginine 317.

It belongs to the RuvB family. In terms of assembly, homohexamer. Forms an RuvA(8)-RuvB(12)-Holliday junction (HJ) complex. HJ DNA is sandwiched between 2 RuvA tetramers; dsDNA enters through RuvA and exits via RuvB. An RuvB hexamer assembles on each DNA strand where it exits the tetramer. Each RuvB hexamer is contacted by two RuvA subunits (via domain III) on 2 adjacent RuvB subunits; this complex drives branch migration. In the full resolvosome a probable DNA-RuvA(4)-RuvB(12)-RuvC(2) complex forms which resolves the HJ.

Its subcellular location is the cytoplasm. The catalysed reaction is ATP + H2O = ADP + phosphate + H(+). In terms of biological role, the RuvA-RuvB-RuvC complex processes Holliday junction (HJ) DNA during genetic recombination and DNA repair, while the RuvA-RuvB complex plays an important role in the rescue of blocked DNA replication forks via replication fork reversal (RFR). RuvA specifically binds to HJ cruciform DNA, conferring on it an open structure. The RuvB hexamer acts as an ATP-dependent pump, pulling dsDNA into and through the RuvAB complex. RuvB forms 2 homohexamers on either side of HJ DNA bound by 1 or 2 RuvA tetramers; 4 subunits per hexamer contact DNA at a time. Coordinated motions by a converter formed by DNA-disengaged RuvB subunits stimulates ATP hydrolysis and nucleotide exchange. Immobilization of the converter enables RuvB to convert the ATP-contained energy into a lever motion, pulling 2 nucleotides of DNA out of the RuvA tetramer per ATP hydrolyzed, thus driving DNA branch migration. The RuvB motors rotate together with the DNA substrate, which together with the progressing nucleotide cycle form the mechanistic basis for DNA recombination by continuous HJ branch migration. Branch migration allows RuvC to scan DNA until it finds its consensus sequence, where it cleaves and resolves cruciform DNA. In Listeria monocytogenes serovar 1/2a (strain ATCC BAA-679 / EGD-e), this protein is Holliday junction branch migration complex subunit RuvB.